A 341-amino-acid polypeptide reads, in one-letter code: Cyclic GMP-AMP synthase-like receptor (341 aa).

ATP contacts are provided by residues S64 and 77–79 (EFD). Positions 77, 79, and 172 each coordinate Mg(2+). GTP is bound at residue D172. ATP-binding positions include K230 and 246–250 (SYHIK). Mn(2+) is bound at residue E258.

This sequence belongs to the mab-21 family. It depends on Mg(2+) as a cofactor. Requires Mn(2+) as cofactor.

The enzyme catalyses GTP + ATP = 2',3'-cGAMP + 2 diphosphate. It catalyses the reaction GTP + ATP = pppGp(2'-5')A + diphosphate. The catalysed reaction is pppGp(2'-5')A = 2',3'-cGAMP + diphosphate. Nucleotidyltransferase that catalyzes the formation of cyclic GMP-AMP (2',3'-cGAMP) from ATP and GTP and plays a key role in innate immunity. Acts as a key sensor of double-stranded RNA (dsRNA), the presence of dsRNA in the cytoplasm being a danger signal that triggers the immune responses. Directly binds dsRNA, activating the nucleotidyltransferase activity, leading to synthesis of 2',3'-cGAMP, a second messenger that binds to and activates Sting, thereby triggering the immune response via activation of the NF-kappa-B transcription factor. The polypeptide is Cyclic GMP-AMP synthase-like receptor (Hydra vulgaris (Hydra)).